The chain runs to 325 residues: Endo-1,4-beta-xylanase 2 (325 aa).

A signal peptide spans 1-18 (MLYTSIFAAAMAASGAMA). The GH10 domain maps to 26-325 (ASNCTTLDSF…KAAVKAIMAI (300 aa)). Asn-28 is a glycosylation site (N-linked (GlcNAc...) asparagine). The active-site Proton donor is the Glu-157. Glu-262 functions as the Nucleophile in the catalytic mechanism. An intrachain disulfide couples Cys-280 to Cys-286.

This sequence belongs to the glycosyl hydrolase 10 (cellulase F) family.

The protein resides in the secreted. It catalyses the reaction Endohydrolysis of (1-&gt;4)-beta-D-xylosidic linkages in xylans.. Its pathway is glycan degradation; xylan degradation. Functionally, endo-1,4-beta-xylanase involved in the hydrolysis of xylan, a major structural heterogeneous polysaccharide found in plant biomass representing the second most abundant polysaccharide in the biosphere, after cellulose. The sequence is that of Endo-1,4-beta-xylanase 2 (xyl2) from Claviceps purpurea (Ergot fungus).